Here is a 478-residue protein sequence, read N- to C-terminus: Geranial dehydrogenase (478 aa).

NAD(+) is bound at residue 230 to 235 (GSTSAG). The active-site Proton acceptor is Glu-252. The Nucleophile role is filled by Cys-286.

It belongs to the aldehyde dehydrogenase family.

The enzyme catalyses (2E)-geranial + NAD(+) + H2O = geranate + NADH + 2 H(+). The catalysed reaction is perillyl aldehyde + NAD(+) + H2O = perillate + NADH + 2 H(+). It participates in terpene metabolism; monoterpene degradation. Its function is as follows. Involved in the degradation of the monoterpenes beta-myrcene and limonene. During anaerobic degradation of beta-myrcene, catalyzes the NAD(+)-dependent oxidation of geranial to geranic acid. Seems to be specific for the trans-isomer geranial, since it does not act on the cis-isomer neral. During degradation of limonene, catalyzes the NAD(+)-dependent conversion of perillyl aldehyde to perrilic acid. This Castellaniella defragrans (strain DSM 12143 / CCUG 39792 / 65Phen) (Alcaligenes defragrans) protein is Geranial dehydrogenase.